We begin with the raw amino-acid sequence, 171 residues long: Crossover junction endodeoxyribonuclease RuvC (171 aa).

Active-site residues include aspartate 11, glutamate 71, and aspartate 143. Mg(2+)-binding residues include aspartate 11, glutamate 71, and aspartate 143.

The protein belongs to the RuvC family. Homodimer which binds Holliday junction (HJ) DNA. The HJ becomes 2-fold symmetrical on binding to RuvC with unstacked arms; it has a different conformation from HJ DNA in complex with RuvA. In the full resolvosome a probable DNA-RuvA(4)-RuvB(12)-RuvC(2) complex forms which resolves the HJ. Mg(2+) is required as a cofactor.

The protein localises to the cytoplasm. The enzyme catalyses Endonucleolytic cleavage at a junction such as a reciprocal single-stranded crossover between two homologous DNA duplexes (Holliday junction).. In terms of biological role, the RuvA-RuvB-RuvC complex processes Holliday junction (HJ) DNA during genetic recombination and DNA repair. Endonuclease that resolves HJ intermediates. Cleaves cruciform DNA by making single-stranded nicks across the HJ at symmetrical positions within the homologous arms, yielding a 5'-phosphate and a 3'-hydroxyl group; requires a central core of homology in the junction. The consensus cleavage sequence is 5'-(A/T)TT(C/G)-3'. Cleavage occurs on the 3'-side of the TT dinucleotide at the point of strand exchange. HJ branch migration catalyzed by RuvA-RuvB allows RuvC to scan DNA until it finds its consensus sequence, where it cleaves and resolves the cruciform DNA. This Chelativorans sp. (strain BNC1) protein is Crossover junction endodeoxyribonuclease RuvC.